A 320-amino-acid polypeptide reads, in one-letter code: Cytochrome c1-1, heme protein, mitochondrial (320 aa).

The N-terminal 77 residues, 1–77 (MSLGKKIRIG…LLSFATIAYS (77 aa)), are a transit peptide targeting the mitochondrion. Topologically, residues 78-280 (DEAEHGLECP…WAAEPEMEER (203 aa)) are mitochondrial intermembrane. One can recognise a Cytochrome c domain in the interval 103–210 (ASIRRGHQVY…NGQNYVFALL (108 aa)). 4 residues coordinate heme c: Cys116, Cys119, His120, and Met239. A helical transmembrane segment spans residues 281 to 301 (KLMGFKWIFVLSLALLQAAYY). Residues 302–320 (RRLRWSVLKSRKLVLDVVN) are Mitochondrial matrix-facing.

The protein belongs to the cytochrome c family. As to quaternary structure, component of the ubiquinol-cytochrome c oxidoreductase (cytochrome b-c1 complex, complex III, CIII), a multisubunit enzyme composed of 3 respiratory subunits cytochrome b, cytochrome c1 and Rieske protein, 2 core protein subunits, and additional low-molecular weight protein subunits. The complex exists as an obligatory dimer and forms supercomplexes (SCs) in the inner mitochondrial membrane with cytochrome c oxidase (complex IV, CIV). Heme c serves as cofactor. In all tissues analyzed.

It is found in the mitochondrion inner membrane. It carries out the reaction a quinol + 2 Fe(III)-[cytochrome c](out) = a quinone + 2 Fe(II)-[cytochrome c](out) + 2 H(+)(out). Its function is as follows. Component of the ubiquinol-cytochrome c oxidoreductase, a multisubunit transmembrane complex that is part of the mitochondrial electron transport chain which drives oxidative phosphorylation. The respiratory chain contains 3 multisubunit complexes succinate dehydrogenase (complex II, CII), ubiquinol-cytochrome c oxidoreductase (cytochrome b-c1 complex, complex III, CIII) and cytochrome c oxidase (complex IV, CIV), that cooperate to transfer electrons derived from NADH and succinate to molecular oxygen, creating an electrochemical gradient over the inner membrane that drives transmembrane transport and the ATP synthase. The cytochrome b-c1 complex catalyzes electron transfer from ubiquinol to cytochrome c, linking this redox reaction to translocation of protons across the mitochondrial inner membrane, with protons being carried across the membrane as hydrogens on the quinol. In the process called Q cycle, 2 protons are consumed from the matrix, 4 protons are released into the intermembrane space and 2 electrons are passed to cytochrome c. Cytochrome c1 is a catalytic core subunit containing a c-type heme. It transfers electrons from the [2Fe-2S] iron-sulfur cluster of the Rieske protein to cytochrome c. The sequence is that of Cytochrome c1-1, heme protein, mitochondrial (CYCL) from Solanum tuberosum (Potato).